A 144-amino-acid polypeptide reads, in one-letter code: Transcriptional regulator SlyA (144 aa).

The region spanning 2–135 (ESPLGSDLAR…LIKLIAKLEH (134 aa)) is the HTH marR-type domain. Residues 49 to 72 (QIQLAKAIGIEQPSLVRTLDQLED) constitute a DNA-binding region (H-T-H motif).

This sequence belongs to the SlyA family. As to quaternary structure, homodimer.

The protein localises to the cytoplasm. Functionally, transcription regulator that can specifically activate or repress expression of target genes. Required for virulence and survival in the macrophage environment. Probably activates the transcription of ssrB. Independently of ssrB activation, capable of stimulating the expression of virulence genes found on pathogenicity island 2 (SPI2). Probably activates expression of ispA, xseB genes, and of omp operon. In Salmonella typhimurium (strain LT2 / SGSC1412 / ATCC 700720), this protein is Transcriptional regulator SlyA.